Reading from the N-terminus, the 616-residue chain is Dihydroxy-acid dehydratase (616 aa).

Asp81 contacts Mg(2+). Residue Cys122 coordinates [2Fe-2S] cluster. Residues Asp123 and Lys124 each contribute to the Mg(2+) site. Position 124 is an N6-carboxylysine (Lys124). Cys195 provides a ligand contact to [2Fe-2S] cluster. A Mg(2+)-binding site is contributed by Glu491. The active-site Proton acceptor is Ser517.

This sequence belongs to the IlvD/Edd family. As to quaternary structure, homodimer. Requires [2Fe-2S] cluster as cofactor. It depends on Mg(2+) as a cofactor.

The catalysed reaction is (2R)-2,3-dihydroxy-3-methylbutanoate = 3-methyl-2-oxobutanoate + H2O. The enzyme catalyses (2R,3R)-2,3-dihydroxy-3-methylpentanoate = (S)-3-methyl-2-oxopentanoate + H2O. Its pathway is amino-acid biosynthesis; L-isoleucine biosynthesis; L-isoleucine from 2-oxobutanoate: step 3/4. It participates in amino-acid biosynthesis; L-valine biosynthesis; L-valine from pyruvate: step 3/4. In terms of biological role, functions in the biosynthesis of branched-chain amino acids. Catalyzes the dehydration of (2R,3R)-2,3-dihydroxy-3-methylpentanoate (2,3-dihydroxy-3-methylvalerate) into 2-oxo-3-methylpentanoate (2-oxo-3-methylvalerate) and of (2R)-2,3-dihydroxy-3-methylbutanoate (2,3-dihydroxyisovalerate) into 2-oxo-3-methylbutanoate (2-oxoisovalerate), the penultimate precursor to L-isoleucine and L-valine, respectively. The chain is Dihydroxy-acid dehydratase from Escherichia coli O17:K52:H18 (strain UMN026 / ExPEC).